We begin with the raw amino-acid sequence, 159 residues long: Ornithine decarboxylase antizyme (159 aa).

This sequence belongs to the ODC antizyme family. Interacts with ODC1 and thereby sterically blocks ODC homodimerization.

Functionally, ornithine decarboxylase (ODC) antizyme protein that negatively regulates ODC activity and intracellular polyamine biosynthesis and uptake in response to increased intracellular polyamine levels. Binds to ODC monomers, inhibiting the assembly of the functional ODC homodimer, and targets the monomers for ubiquitin-independent proteolytic destruction by the 26S proteasome. The chain is Ornithine decarboxylase antizyme from Caenorhabditis elegans.